The chain runs to 498 residues: ATP synthase subunit beta, chloroplastic (498 aa).

Position 172–179 (172–179 (GGAGVGKT)) interacts with ATP.

Belongs to the ATPase alpha/beta chains family. As to quaternary structure, F-type ATPases have 2 components, CF(1) - the catalytic core - and CF(0) - the membrane proton channel. CF(1) has five subunits: alpha(3), beta(3), gamma(1), delta(1), epsilon(1). CF(0) has four main subunits: a(1), b(1), b'(1) and c(9-12).

The protein resides in the plastid. Its subcellular location is the chloroplast thylakoid membrane. It carries out the reaction ATP + H2O + 4 H(+)(in) = ADP + phosphate + 5 H(+)(out). Produces ATP from ADP in the presence of a proton gradient across the membrane. The catalytic sites are hosted primarily by the beta subunits. In Zea mays (Maize), this protein is ATP synthase subunit beta, chloroplastic.